The following is a 442-amino-acid chain: Hydroxycinnamoyltransferase 1 (442 aa).

Active-site proton acceptor residues include His159 and Asp389.

The protein belongs to the plant acyltransferase family. In terms of tissue distribution, expressed in roots, leaves, stems and seeds.

Hydroxycinnamoyl transferase that catalyzes the transfer of an acyl from p-coumaryol-CoA to various acyl acceptors. Can use feruloyl-CoA and caffeoyl-CoA as acyl donors. The protein is Hydroxycinnamoyltransferase 1 of Oryza sativa subsp. japonica (Rice).